Consider the following 1083-residue polypeptide: Solute carrier family 12 member 7 (1083 aa).

Residues 1-52 (MPTNFTVVPVEAHADGGGDETAERTEAPGTPEGPEPERPSPGDGNPRENSPF) form a disordered region. At 1-119 (MPTNFTVVPV…RREAKAPRMG (119 aa)) the chain is on the cytoplasmic side. Residues 12–26 (AHADGGGDETAERTE) are compositionally biased toward basic and acidic residues. Phosphothreonine is present on Thr-30. Ser-50 and Ser-62 each carry phosphoserine. The chain crosses the membrane as a discontinuously helical span at residues 120–142 (TFIGVYLPCLQNILGVILFLRLT). Asn-131 and Ile-132 together coordinate K(+). Val-135 provides a ligand contact to chloride. Residues 143-149 (WIVGVAG) are Extracellular-facing. The helical transmembrane segment at 150–172 (VLESFLIVAMCCTCTMLTAISMS) threads the bilayer. Residues 173 to 196 (AIATNGVVPAGGSYYMISRSLGPE) lie on the Cytoplasmic side of the membrane. The chain crosses the membrane as a helical span at residues 197–225 (FGGAVGLCFYLGTTFAGAMYILGTIEIFL). The Extracellular portion of the chain corresponds to 226–249 (TYISPGAAIFQAEAAGGEAAAMLH). Helical transmembrane passes span 250 to 270 (NMRV…FVGV) and 272 to 300 (YVNK…KSAF). Topologically, residues 301–419 (DPPDIPVCLL…PYVLTDIAAS (119 aa)) are extracellular. Intrachain disulfides connect Cys-308–Cys-323 and Cys-343–Cys-352. N-linked (GlcNAc...) asparagine glycosylation is present at Asn-312. Asn-360 carries an N-linked (GlcNAc...) asparagine glycan. The helical transmembrane segment at 420–440 (FTLLVGIYFPSVTGIMAGSNR) threads the bilayer. Positions 429 and 432 each coordinate K(+). Pro-429 lines the chloride pocket. Residues Gly-433 and Ile-434 each coordinate chloride. Over 441-450 (SGDLKDAQKS) the chain is Cytoplasmic. The helical transmembrane segment at 451 to 473 (IPTGTILAIVTTSFIYLSCIVLF) threads the bilayer. Over 474-504 (GACIEGVVLRDKFGEALQGNLVIGMLAWPSP) the chain is Extracellular. The helical transmembrane segment at 505–531 (WVIVIGSFFSTCGAGLQSLTGAPRLLQ) threads the bilayer. Residues 532 to 554 (AIARDGIVPFLQVFGHGKANGEP) lie on the Cytoplasmic side of the membrane. 2 helical membrane passes run 555–571 (TWAL…GILI) and 574–598 (LDSV…ACAV). Chloride is bound at residue Tyr-589. At 599–612 (QTLLRTPNWRPRFK) the chain is on the cytoplasmic side. 2 helical membrane passes run 613 to 632 (FYHW…LMFI) and 636 to 651 (YYAL…IYKY). Residues 652–1083 (IEYRGAEKEW…GGREVITIYS (432 aa)) lie on the Cytoplasmic side of the membrane. A scissor helix region spans residues 664-680 (GIRGLSLNAARYALLRV). Phosphothreonine occurs at positions 973 and 980.

Belongs to the SLC12A transporter family. K/Cl co-transporter subfamily. Homodimer; adopts a domain-swap conformation at the scissor helices connecting the transmembrane domain and C-terminal domain. Heterodimer with K-Cl cotransporter SLC12A5. Detected in muscle, brain, lung, heart and kidney.

The protein localises to the cell membrane. It carries out the reaction K(+)(in) + chloride(in) = K(+)(out) + chloride(out). With respect to regulation, activated by N-ethylmaleimide (NEM). Inhibited by furosemide, DIDS and bumetanide. The inhibition is much stronger in the presence of 50 mM K(+) in the uptake medium. Inhibited by DIOA. Inhibited by WNK3. Functionally, mediates electroneutral potassium-chloride cotransport when activated by cell swelling. May mediate K(+) uptake into Deiters' cells in the cochlea and contribute to K(+) recycling in the inner ear. Important for the survival of cochlear outer and inner hair cells and the maintenance of the organ of Corti. May be required for basolateral Cl(-) extrusion in the kidney and contribute to renal acidification. This Homo sapiens (Human) protein is Solute carrier family 12 member 7.